Here is a 585-residue protein sequence, read N- to C-terminus: A-type ATP synthase subunit A (585 aa).

231-238 contacts ATP; it reads GPFGSGKT.

The protein belongs to the ATPase alpha/beta chains family. Has multiple subunits with at least A(3), B(3), C, D, E, F, H, I and proteolipid K(x).

The protein localises to the cell membrane. The enzyme catalyses ATP + H2O + 4 H(+)(in) = ADP + phosphate + 5 H(+)(out). Its function is as follows. Component of the A-type ATP synthase that produces ATP from ADP in the presence of a proton gradient across the membrane. The A chain is the catalytic subunit. The chain is A-type ATP synthase subunit A from Thermococcus onnurineus (strain NA1).